Reading from the N-terminus, the 194-residue chain is ATP-dependent Clp protease proteolytic subunit (194 aa).

The Nucleophile role is filled by Ser97. The active site involves His122.

This sequence belongs to the peptidase S14 family. As to quaternary structure, fourteen ClpP subunits assemble into 2 heptameric rings which stack back to back to give a disk-like structure with a central cavity, resembling the structure of eukaryotic proteasomes.

Its subcellular location is the cytoplasm. The catalysed reaction is Hydrolysis of proteins to small peptides in the presence of ATP and magnesium. alpha-casein is the usual test substrate. In the absence of ATP, only oligopeptides shorter than five residues are hydrolyzed (such as succinyl-Leu-Tyr-|-NHMec, and Leu-Tyr-Leu-|-Tyr-Trp, in which cleavage of the -Tyr-|-Leu- and -Tyr-|-Trp bonds also occurs).. Its function is as follows. Cleaves peptides in various proteins in a process that requires ATP hydrolysis. Has a chymotrypsin-like activity. Plays a major role in the degradation of misfolded proteins. This chain is ATP-dependent Clp protease proteolytic subunit, found in Campylobacter jejuni subsp. jejuni serotype O:6 (strain 81116 / NCTC 11828).